A 429-amino-acid polypeptide reads, in one-letter code: Glucose-1-phosphate adenylyltransferase (429 aa).

Alpha-D-glucose 1-phosphate contacts are provided by residues glycine 162, glutamate 177–lysine 178, and serine 209.

Belongs to the bacterial/plant glucose-1-phosphate adenylyltransferase family. As to quaternary structure, homotetramer.

It catalyses the reaction alpha-D-glucose 1-phosphate + ATP + H(+) = ADP-alpha-D-glucose + diphosphate. It functions in the pathway glycan biosynthesis; glycogen biosynthesis. Involved in the biosynthesis of ADP-glucose, a building block required for the elongation reactions to produce glycogen. Catalyzes the reaction between ATP and alpha-D-glucose 1-phosphate (G1P) to produce pyrophosphate and ADP-Glc. The sequence is that of Glucose-1-phosphate adenylyltransferase from Picosynechococcus sp. (strain ATCC 27264 / PCC 7002 / PR-6) (Agmenellum quadruplicatum).